The primary structure comprises 411 residues: E3 ubiquitin-protein ligase PUB23 (411 aa).

Positions 11–86 (EIPPFFLCPI…QSWCTLNASY (76 aa)) constitute a U-box domain. ARM repeat units follow at residues 132–173 (ATNK…HLET), 175–203 (ETVL…RGMY), 221–261 (DPMQ…NICP), and 263–306 (GRNR…LLCQ).

In terms of assembly, interacts with RPN12A. Auto-ubiquitinated.

It is found in the cytoplasm. It carries out the reaction S-ubiquitinyl-[E2 ubiquitin-conjugating enzyme]-L-cysteine + [acceptor protein]-L-lysine = [E2 ubiquitin-conjugating enzyme]-L-cysteine + N(6)-ubiquitinyl-[acceptor protein]-L-lysine.. It functions in the pathway protein modification; protein ubiquitination. In terms of biological role, E3 ubiquitin-protein ligase that negatively regulates water stress response. May control in coordination with PUB23 a drought signaling pathway by ubiquitinating cytosolic RPN12a. Acts as a negative regulator of the immunity triggered by the pathogen-associated molecular patterns (PAMPs), in association with PUB22 and PUB24. This chain is E3 ubiquitin-protein ligase PUB23 (PUB23), found in Arabidopsis thaliana (Mouse-ear cress).